Here is a 132-residue protein sequence, read N- to C-terminus: Gamma-crystallin-5 (132 aa).

In terms of domain architecture, Beta/gamma crystallin 'Greek key' 2 spans 1–40; sequence ILYEQPSYRGHQYYLWKGEYPDFQRWMGFNDSIRSCRMSP. The segment at 41–45 is connecting peptide; it reads YHQGQ. 2 consecutive Beta/gamma crystallin 'Greek key' domains span residues 46–86 and 87–129; these read YKMR…NVFD and GNWM…RRVH.

The protein belongs to the beta/gamma-crystallin family. Monomer.

In terms of biological role, crystallins are the dominant structural components of the vertebrate eye lens. The polypeptide is Gamma-crystallin-5 (cryg5) (Xenopus laevis (African clawed frog)).